Consider the following 545-residue polypeptide: CTP synthase (545 aa).

Positions 1–266 are amidoligase domain; the sequence is MTTNYIFVTG…DDYICKRFSL (266 aa). Residue Ser14 participates in CTP binding. A UTP-binding site is contributed by Ser14. ATP-binding positions include 15–20 and Asp72; that span reads SLGKGI. The Mg(2+) site is built by Asp72 and Glu140. CTP is bound by residues 147–149, 187–192, and Lys223; these read DIE and KTKPTQ. UTP contacts are provided by residues 187-192 and Lys223; that span reads KTKPTQ. 239-241 is a binding site for ATP; that stretch reads KDV. In terms of domain architecture, Glutamine amidotransferase type-1 spans 291-542; that stretch reads TIGMVGKYIE…VKAASEHQKR (252 aa). Gly352 is a binding site for L-glutamine. Cys379 acts as the Nucleophile; for glutamine hydrolysis in catalysis. L-glutamine-binding positions include 380 to 383, Glu403, and Arg470; that span reads LGMQ. Active-site residues include His515 and Glu517.

It belongs to the CTP synthase family. In terms of assembly, homotetramer.

It carries out the reaction UTP + L-glutamine + ATP + H2O = CTP + L-glutamate + ADP + phosphate + 2 H(+). The catalysed reaction is L-glutamine + H2O = L-glutamate + NH4(+). The enzyme catalyses UTP + NH4(+) + ATP = CTP + ADP + phosphate + 2 H(+). The protein operates within pyrimidine metabolism; CTP biosynthesis via de novo pathway; CTP from UDP: step 2/2. Allosterically activated by GTP, when glutamine is the substrate; GTP has no effect on the reaction when ammonia is the substrate. The allosteric effector GTP functions by stabilizing the protein conformation that binds the tetrahedral intermediate(s) formed during glutamine hydrolysis. Inhibited by the product CTP, via allosteric rather than competitive inhibition. Functionally, catalyzes the ATP-dependent amination of UTP to CTP with either L-glutamine or ammonia as the source of nitrogen. Regulates intracellular CTP levels through interactions with the four ribonucleotide triphosphates. This Salmonella schwarzengrund (strain CVM19633) protein is CTP synthase.